A 47-amino-acid chain; its full sequence is Large ribosomal subunit protein uL14c (47 aa).

The protein belongs to the universal ribosomal protein uL14 family. In terms of assembly, part of the 50S ribosomal subunit.

The protein resides in the plastid. It is found in the chloroplast. Functionally, binds to 23S rRNA. The chain is Large ribosomal subunit protein uL14c (rpl14) from Vigna unguiculata (Cowpea).